Reading from the N-terminus, the 224-residue chain is Probable septum site-determining protein MinC (224 aa).

This sequence belongs to the MinC family. In terms of assembly, interacts with MinD and FtsZ.

Its function is as follows. Cell division inhibitor that blocks the formation of polar Z ring septums. Rapidly oscillates between the poles of the cell to destabilize FtsZ filaments that have formed before they mature into polar Z rings. Prevents FtsZ polymerization. In Shewanella amazonensis (strain ATCC BAA-1098 / SB2B), this protein is Probable septum site-determining protein MinC.